A 283-amino-acid polypeptide reads, in one-letter code: Tryptophan 2,3-dioxygenase (283 aa).

Substrate is bound by residues 52–56 (FIIQH), Tyr-114, and Arg-118. A heme-binding site is contributed by His-241. Position 255 (Thr-255) interacts with substrate.

Belongs to the tryptophan 2,3-dioxygenase family. Homotetramer. Requires heme as cofactor.

The enzyme catalyses L-tryptophan + O2 = N-formyl-L-kynurenine. Its pathway is amino-acid degradation; L-tryptophan degradation via kynurenine pathway; L-kynurenine from L-tryptophan: step 1/2. In terms of biological role, heme-dependent dioxygenase that catalyzes the oxidative cleavage of the L-tryptophan (L-Trp) pyrrole ring and converts L-tryptophan to N-formyl-L-kynurenine. Catalyzes the oxidative cleavage of the indole moiety. The polypeptide is Tryptophan 2,3-dioxygenase (Pseudomonas fluorescens (strain ATCC BAA-477 / NRRL B-23932 / Pf-5)).